A 20-amino-acid chain; its full sequence is 39 kDa major outer membrane protein (20 aa).

It is found in the cell outer membrane. The protein is 39 kDa major outer membrane protein of Aggregatibacter actinomycetemcomitans (Actinobacillus actinomycetemcomitans).